The sequence spans 184 residues: UPF0149 protein Pmen_0324 (184 aa).

The protein belongs to the UPF0149 family.

This chain is UPF0149 protein Pmen_0324, found in Ectopseudomonas mendocina (strain ymp) (Pseudomonas mendocina).